A 195-amino-acid chain; its full sequence is Probable GTP-binding protein EngB (195 aa).

The EngB-type G domain maps to 24–195 (ELPEIALAGR…EAWDAILEKL (172 aa)). Residues 32 to 39 (GRSNVGKS), 59 to 63 (GKTQL), 77 to 80 (DVPG), 144 to 147 (TKAD), and 176 to 178 (FSS) each bind GTP. Residues Ser39 and Thr61 each contribute to the Mg(2+) site.

This sequence belongs to the TRAFAC class TrmE-Era-EngA-EngB-Septin-like GTPase superfamily. EngB GTPase family. Mg(2+) is required as a cofactor.

Functionally, necessary for normal cell division and for the maintenance of normal septation. In Streptococcus pneumoniae (strain Hungary19A-6), this protein is Probable GTP-binding protein EngB.